Here is a 193-residue protein sequence, read N- to C-terminus: ATP-dependent Clp protease proteolytic subunit 2 (193 aa).

Residue S98 is the Nucleophile of the active site. Residue H123 is part of the active site.

The protein belongs to the peptidase S14 family. As to quaternary structure, fourteen ClpP subunits assemble into 2 heptameric rings which stack back to back to give a disk-like structure with a central cavity, resembling the structure of eukaryotic proteasomes.

Its subcellular location is the cytoplasm. It catalyses the reaction Hydrolysis of proteins to small peptides in the presence of ATP and magnesium. alpha-casein is the usual test substrate. In the absence of ATP, only oligopeptides shorter than five residues are hydrolyzed (such as succinyl-Leu-Tyr-|-NHMec, and Leu-Tyr-Leu-|-Tyr-Trp, in which cleavage of the -Tyr-|-Leu- and -Tyr-|-Trp bonds also occurs).. In terms of biological role, cleaves peptides in various proteins in a process that requires ATP hydrolysis. Has a chymotrypsin-like activity. Plays a major role in the degradation of misfolded proteins. The chain is ATP-dependent Clp protease proteolytic subunit 2 from Bacillus cereus (strain ATCC 10987 / NRS 248).